A 445-amino-acid chain; its full sequence is Tubulin beta-7 chain (445 aa).

GTP is bound by residues Q11, E69, S138, G142, T143, G144, N204, and N226. E69 contributes to the Mg(2+) binding site. The disordered stretch occupies residues 421–445; it reads EYQQYQDATAEDEEYEEEEEEEEET. Over residues 429–445 the composition is skewed to acidic residues; sequence TAEDEEYEEEEEEEEET.

Belongs to the tubulin family. Dimer of alpha and beta chains. A typical microtubule is a hollow water-filled tube with an outer diameter of 25 nm and an inner diameter of 15 nM. Alpha-beta heterodimers associate head-to-tail to form protofilaments running lengthwise along the microtubule wall with the beta-tubulin subunit facing the microtubule plus end conferring a structural polarity. Microtubules usually have 13 protofilaments but different protofilament numbers can be found in some organisms and specialized cells. Requires Mg(2+) as cofactor.

It localises to the cytoplasm. Its subcellular location is the cytoskeleton. Its function is as follows. Tubulin is the major constituent of microtubules, a cylinder consisting of laterally associated linear protofilaments composed of alpha- and beta-tubulin heterodimers. Microtubules grow by the addition of GTP-tubulin dimers to the microtubule end, where a stabilizing cap forms. Below the cap, tubulin dimers are in GDP-bound state, owing to GTPase activity of alpha-tubulin. In Zea mays (Maize), this protein is Tubulin beta-7 chain (TUBB7).